The following is a 221-amino-acid chain: Glutathione peroxidase 6 (221 aa).

A signal peptide spans 1–19; the sequence is MTQQFWGPCLFSLFMAVLA. The active site involves cysteine 73.

The protein belongs to the glutathione peroxidase family. In terms of tissue distribution, expressed in the Bowman glands.

It is found in the secreted. The enzyme catalyses 2 glutathione + H2O2 = glutathione disulfide + 2 H2O. The chain is Glutathione peroxidase 6 (Gpx6) from Rattus norvegicus (Rat).